Here is a 618-residue protein sequence, read N- to C-terminus: Auxin efflux carrier component 3a (618 aa).

The Extracellular portion of the chain corresponds to 1–6; it reads MISGHD. A helical transmembrane segment spans residues 7 to 27; that stretch reads FYTVMAAVVPLYVAMFLAYGS. Topologically, residues 28 to 38 are cytoplasmic; the sequence is VRWWGIFTPDQ. The helical transmembrane segment at 39-59 threads the bilayer; sequence CSGINRFVAIFAVPLLSFHFI. Val-51 contributes to the (indol-3-yl)acetate binding site. The Extracellular segment spans residues 60-70; sequence STNDPYAMNLR. The helical transmembrane segment at 71 to 90 threads the bilayer; that stretch reads FLAADTLQKLLVLAGLAAWS. At 91 to 104 the chain is on the cytoplasmic side; the sequence is RLPSRTGAPRLDWS. The helical transmembrane segment at 105–125 threads the bilayer; that stretch reads ITLFSLSTLPNTLVMGIPLLI. 2 residues coordinate (indol-3-yl)acetate: Asn-115 and Leu-117. Residues 126–134 lie on the Extracellular side of the membrane; it reads AMYGPYSGS. The helical transmembrane segment at 135 to 155 threads the bilayer; sequence LMVQIVVLQCIIWYTLMLFLF. Residue Tyr-148 coordinates (indol-3-yl)acetate. The Cytoplasmic segment spans residues 156 to 478; sequence EFRAARMLIA…LIRNPNTYSS (323 aa). The span at 281-293 shows a compositional bias: polar residues; it reads SLQSSRGPTPRQS. The segment at 281-312 is disordered; that stretch reads SLQSSRGPTPRQSNFDEHSARPPKPPATTTGA. The helical transmembrane segment at 479-499 threads the bilayer; sequence LLGLAWSLVAFRWHVSMPAIV. The Extracellular segment spans residues 500-502; the sequence is EKS. A helical membrane pass occupies residues 503-523; that stretch reads ISILSDAGLGMAMFSLGLFMA. Residues 524–539 are Cytoplasmic-facing; it reads LQPSIIACGKSAAVVS. The helical transmembrane segment at 540-560 threads the bilayer; that stretch reads MAVRFLAGPAVMAAASIAIGL. The Extracellular segment spans residues 561-563; it reads RGT. Residues 564–584 traverse the membrane as a helical segment; that stretch reads LLHVAIVQAALPQGIVPFVFA. (indol-3-yl)acetate contacts are provided by Ile-578 and Val-579. Residues 585-597 lie on the Cytoplasmic side of the membrane; that stretch reads KEYNVHPAILSTA. The helical transmembrane segment at 598 to 618 threads the bilayer; sequence VIFGMLIALPITLLYYILLGL.

It belongs to the auxin efflux carrier (TC 2.A.69.1) family. In terms of assembly, homodimer. Expressed in coleoptiles, roots, vascular bundles of leaves, shoots, lamina joints and vascular bundles of the lemma and filament. Expressed in stem bases, stems, leaves and young panicles.

The protein localises to the cell membrane. Functionally, acts as a component of the auxin efflux carrier. Involved in the polar auxin transport which may regulate crown root development and response to water stress. The protein is Auxin efflux carrier component 3a of Oryza sativa subsp. japonica (Rice).